The primary structure comprises 279 residues: Acyl-coenzyme A thioesterase MBLAC2 (279 aa).

The residue at position 2 (S2) is an N-acetylserine. 7 residues coordinate Zn(2+): H83, H85, D87, H88, H170, D189, and H231. Residue C254 is the site of S-palmitoyl cysteine attachment.

The protein belongs to the metallo-beta-lactamase superfamily. Glyoxalase II family. Zn(2+) is required as a cofactor. Post-translationally, palmitoylated on Cys-254 by ZDHHC20.

It is found in the endoplasmic reticulum membrane. The protein localises to the cell membrane. The catalysed reaction is hexadecanoyl-CoA + H2O = hexadecanoate + CoA + H(+). It carries out the reaction dodecanoyl-CoA + H2O = dodecanoate + CoA + H(+). It catalyses the reaction tetradecanoyl-CoA + H2O = tetradecanoate + CoA + H(+). The enzyme catalyses octadecanoyl-CoA + H2O = octadecanoate + CoA + H(+). The catalysed reaction is a beta-lactam + H2O = a substituted beta-amino acid. Functionally, acyl-CoA thioesterases are a group of enzymes that catalyze the hydrolysis of acyl-CoAs to the free fatty acid and coenzyme A (CoASH), providing the potential to regulate intracellular levels of acyl-CoAs, free fatty acids and CoASH. Has an acyl-CoA thioesterase activity towards the long chain fatty acyl-CoA thioester palmitoyl-CoA (hexadecanoyl-CoA; C16:0-CoA). Displays a substrate preference for fatty acyl-CoAs with chain-lengths C12-C18. In Bos taurus (Bovine), this protein is Acyl-coenzyme A thioesterase MBLAC2 (MBLAC2).